We begin with the raw amino-acid sequence, 99 residues long: IEVLLGSDDGGLAFVPGNFSVSAGEKITFKNNAGFPHNVVFDEDEIPAGVDASKISMSEEDLLNGPGETYSVTLSEKGTYTFYCAPHQGAGMVGKVTVN.

A Plastocyanin-like domain is found at 1 to 99; that stretch reads IEVLLGSDDG…AGMVGKVTVN (99 aa). His-37, Cys-84, His-87, and Met-92 together coordinate Cu cation.

Belongs to the plastocyanin family. Cu(2+) is required as a cofactor.

Its subcellular location is the plastid. It localises to the chloroplast thylakoid membrane. In terms of biological role, participates in electron transfer between P700 and the cytochrome b6-f complex in photosystem I. This Nicotiana tabacum (Common tobacco) protein is Plastocyanin B'/B''.